A 417-amino-acid polypeptide reads, in one-letter code: Queuine tRNA-ribosyltransferase accessory subunit 2 (417 aa).

Residues Cys-324, Cys-326, Cys-329, and His-355 each contribute to the Zn(2+) site.

It belongs to the queuine tRNA-ribosyltransferase family. QTRT2 subfamily. Heterodimer of a catalytic subunit and an accessory subunit. Zn(2+) serves as cofactor.

The protein resides in the cytoplasm. In terms of biological role, non-catalytic subunit of the queuine tRNA-ribosyltransferase (TGT) that catalyzes the base-exchange of a guanine (G) residue with queuine (Q) at position 34 (anticodon wobble position) in tRNAs with GU(N) anticodons (tRNA-Asp, -Asn, -His and -Tyr), resulting in the hypermodified nucleoside queuosine (7-(((4,5-cis-dihydroxy-2-cyclopenten-1-yl)amino)methyl)-7-deazaguanosine). In Drosophila virilis (Fruit fly), this protein is Queuine tRNA-ribosyltransferase accessory subunit 2.